The chain runs to 339 residues: Annexin A2 (339 aa).

S2 is subject to N-acetylserine. The segment at 2-24 (STVHEILCKLSLEGDHSTPPSAY) is S100A10-binding site. The residue at position 24 (Y24) is a Phosphotyrosine; by SRC. S26 carries the phosphoserine; by PKC modification. Annexin repeat units lie at residues 33–104 (FDAE…GLLK) and 105–176 (TPAQ…ALAK). K49 is subject to N6-acetyllysine; alternate. K49 is covalently cross-linked (Glycyl lysine isopeptide (Lys-Gly) (interchain with G-Cter in SUMO1); alternate). K49 participates in a covalent cross-link: Glycyl lysine isopeptide (Lys-Gly) (interchain with G-Cter in SUMO2); alternate. K152 carries the N6-acetyllysine modification. S184 carries the phosphoserine modification. Annexin repeat units follow at residues 189-261 (ELID…NLVQ) and 265-336 (NKPL…YLCG). Position 199 is a phosphotyrosine (Y199). Position 227 is an N6-acetyllysine (K227).

The protein belongs to the annexin family. Heterotetramer containing 2 light chains of S100A10/p11 and 2 heavy chains of ANXA2/p36. Interacts with ATP1B1. Interacts with DYSF. Interacts with COCH. Interacts (via repeat Annexin 1) with PCSK9 (via the C-terminal domain); the interaction inhibits the degradation of LDLR. Interacts with CEACAM1 (via the cytoplasmic domain); this interaction is regulated by phosphorylation of CEACAM1. Interacts with APPL2 and APPL1; targets APPL2 to endosomes and acting in parallel to RAB5A. Interacts with S100A4. May interact with UBAP2. Interacts with PLEKHG4B; this interaction is required for PLEKHG4B localization to cell-cell adhesions. Interacts with FAM13A. Interacts with salivary cystatin-L2 (via loop 2) from the tick Ixodes scapularis; the interaction results in reduced activation of mouse NLRC4 inflammasome formation upon Anaplasma phagocytophilum infection. Post-translationally, ISGylated.

The protein resides in the secreted. It localises to the extracellular space. The protein localises to the extracellular matrix. It is found in the basement membrane. Its subcellular location is the melanosome. The protein resides in the early endosome. In terms of biological role, calcium-regulated membrane-binding protein whose affinity for calcium is greatly enhanced by anionic phospholipids. It binds two calcium ions with high affinity. May be involved in heat-stress response. Inhibits PCSK9-enhanced LDLR degradation, probably reduces PCSK9 protein levels via a translational mechanism but also competes with LDLR for binding with PCSK9. Binds to endosomes damaged by phagocytosis of particulate wear debris and participates in endosomal membrane stabilization, thereby limiting NLRP3 inflammasome activation. Required for endothelial cell surface plasmin generation and may support fibrinolytic surveillance and neoangiogenesis. (Microbial infection) Regulates the formation of the NLRC4 inflammasome triggered by Anaplasma phagocytophilum infection. Its function is as follows. (Microbial infection) Protects against Klebsiella pneumoniae infection. Attenuates bacteria-induced pulmonary inflammation and promotes intro-abdominal pathogen clearance. Promotes anti-inflammatory responses by facilitating TLR4 internalization and translocation into early endosomal membranes; this leads to activation of TRAM-dependent endosomal signaling and release of anti-inflammatory cytokines. Functionally, (Microbial infection) Promotes macrophage phagocytic efficiency towards Cryptococcus neoformans and ability to control fungal infection inside the cells. In terms of biological role, (Microbial infection) Contributes to protection against Pseudomonas aeruginosa infection by regulating autophagy via the AKT1-mTOR-ULK1/2 signaling pathway and activation of Rho GTPases via FAM13A-mediated mechanism. The protein is Annexin A2 (Anxa2) of Mus musculus (Mouse).